We begin with the raw amino-acid sequence, 96 residues long: Probable quinol oxidase subunit 4 (96 aa).

Helical transmembrane passes span 8 to 28, 36 to 56, and 68 to 88; these read TVGF…TLYT, VTII…MFMH, and FKVI…YWVM.

Belongs to the cytochrome c oxidase bacterial subunit 4 family.

It localises to the cell membrane. It catalyses the reaction 2 a quinol + O2 = 2 a quinone + 2 H2O. Functionally, catalyzes quinol oxidation with the concomitant reduction of oxygen to water. This chain is Probable quinol oxidase subunit 4 (qoxD), found in Staphylococcus epidermidis (strain ATCC 35984 / DSM 28319 / BCRC 17069 / CCUG 31568 / BM 3577 / RP62A).